The chain runs to 668 residues: Biosynthetic arginine decarboxylase (668 aa).

An N6-(pyridoxal phosphate)lysine modification is found at K105. 286-296 contributes to the substrate binding site; sequence LDVGGGLGVDY.

Belongs to the Orn/Lys/Arg decarboxylase class-II family. SpeA subfamily. Requires Mg(2+) as cofactor. It depends on pyridoxal 5'-phosphate as a cofactor.

It carries out the reaction L-arginine + H(+) = agmatine + CO2. Functionally, catalyzes the biosynthesis of agmatine from arginine. The protein is Biosynthetic arginine decarboxylase of Rhodopirellula baltica (strain DSM 10527 / NCIMB 13988 / SH1).